A 556-amino-acid polypeptide reads, in one-letter code: MWPVGSSYTRACSVQRWPKRCVYWAPSPQNVLEINPHRFQESRRSAALYRKHVVESKLNLIKKELLKAELDNVVQTNLANSQAITDYLTTLEDLANILVDRAQQPASSNQGGARPQTDPHVPQPAPAIPSAPPKENTTTVVIAPGDSGYTFSTNFLREFLSGLYATSASWLPSYGPWFTAMTANAMQRRVFPKELKGTANLKNSTSLKLITEVLTTVASINVDFYTDLRNLSDFNAALCILNAYYCKTQGHPLPASREELLDNLGPKIAALVADIKGLGSDSNITFTFTFSSGQQAATIAPVNGDGRYNKDFFSNHKIFRLLVAKEVVLLPNFTNVPGATDGPDYIYALTSALFSDNIPPFGNYQLNLRSGIKGVEYLILVYLTLANAQLSKPDGRRLHLKALLGAAFEHSSKVQLFKRDEVFTFLMKEYVLPILSHNNNISTTELFPGMALAALEVGNQINFDPNKHFVNLAGTKFTKIFNVLNQKLMFKDVRELLVAKSELRVALENGLAATLNSIAPVNAVVEVIQKQFGGGDDYDRLYFLVLGCLPVTVAVV.

An interaction with major capsid protein/MCP region spans residues 1–54 (MWPVGSSYTRACSVQRWPKRCVYWAPSPQNVLEINPHRFQESRRSAALYRKHVV). The disordered stretch occupies residues 104-136 (QPASSNQGGARPQTDPHVPQPAPAIPSAPPKEN). Positions 121–132 (VPQPAPAIPSAP) are enriched in pro residues.

The protein belongs to the herpesviridae CVC2 protein family. Heterodimerizes with CVC1. Interacts with major capsid protein/MCP and triplex capsid protein 1/TRX1 at the pentamer vertices. Interacts with the large tegument protein/LTP.

It localises to the virion. Its subcellular location is the host nucleus. Its function is as follows. Capsid vertex-specific component that plays a role during viral DNA encapsidation, assuring correct genome cleavage and presumably stabilizing capsids that contain full-length viral genomes. Participates in the interaction between the capsid and the tegument through interaction with the large tegument protein/LTP. The chain is Capsid vertex component 2 from Connochaetes taurinus (Blue wildebeest).